Consider the following 237-residue polypeptide: DCN1-like protein 5 (237 aa).

At Ser-41 the chain carries Phosphoserine; by IKKA. One can recognise a DCUN1 domain in the interval 46–232; it reads FSRKKCLAWF…LLDEFVEWQK (187 aa).

In terms of assembly, part of a complex that contains DCUN1D5, CUL1 and RBX1; this interaction is bridged by CUL1. Interacts (via the DCUN1 domain) with the unneddylated cullins: interacts with CUL1, CUL2, CUL3, CUL4A, CUL4B and CUL5; these interactions promote the cullin neddylation and the identity of the cullin dictates the affinity of the interaction. Interacts (via DCUN1 domain) with UBE2M (N-terminally acetylated form) and probably with UBE2F (N-terminally acetylated form). May also interact with regulators or subunits of cullin-RING ligases such as RBX1, RNF7, ELOB and DDB1; these interactions are bridged by cullins. Interacts with CAND1; this interaction is bridged by cullins and strongly inhibits the neddylation of cullins. These CAND-cullin-DCNL complexes can only be neddylated in the presence of a substrate adapter. In terms of processing, phosphorylation at Ser-41 is independent of cullin's interaction. Phosphorylated in response to both TICAM1 and MYD88 dependent Toll-like receptor (TLR) pathway activation. Phosphorylated in response to IL1B stimulation. In terms of tissue distribution, highly expressed in testis. Lower levels of expression in skin, thymus, spleen, lymph nodes, lung, brain, heart, skeletal muscles, kidney, liver an ovary.

It localises to the nucleus. It is found in the cytoplasm. Its subcellular location is the cytoskeleton. The protein resides in the spindle. In terms of biological role, contributes to the neddylation of all cullins by transferring NEDD8 from N-terminally acetylated NEDD8-conjugating E2s enzyme to different cullin C-terminal domain-RBX complexes which is necessary for the activation of cullin-RING E3 ubiquitin ligases (CRLs). May play a role in DNA damage response and may participate in cell proliferation and anchorage-independent cell growth. This is DCN1-like protein 5 from Mus musculus (Mouse).